Consider the following 208-residue polypeptide: Neuroendocrine protein 7B2 (208 aa).

Positions methionine 1–glycine 26 are cleaved as a signal peptide. Cysteine 120 and cysteine 129 are oxidised to a cystine. At serine 204 the chain carries Phosphoserine.

It belongs to the 7B2 family. As to quaternary structure, interacts with pcsk2 early in the secretory pathway. Dissociation occurs at later stages. Post-translationally, proteolytically cleaved in the Golgi by a furin-like convertase to generate bioactive peptides. Sulfated on tyrosine residues.

Its subcellular location is the secreted. Acts as a molecular chaperone for pcsk2, preventing its premature activation in the regulated secretory pathway. Binds to inactive pcsk2 in the endoplasmic reticulum and facilitates its transport from there to later compartments of the secretory pathway where it is proteolytically matured and activated. Also required for cleavage of pcsk2 but does not appear to be involved in its folding. This is Neuroendocrine protein 7B2 (scg5.L) from Xenopus laevis (African clawed frog).